The sequence spans 651 residues: Choline transporter-like protein 1 (651 aa).

The Cytoplasmic portion of the chain corresponds to 1–25 (MGCCGSTQNSKRDWRPLEEHSCTDI). Residues 26–46 (PWLLLFILFCVGMGFICGFSI) traverse the membrane as a helical segment. At 47 to 208 (ATGAASRLVF…RLISGVMTSK (162 aa)) the chain is on the extracellular side. N-linked (GlcNAc...) asparagine glycans are attached at residues Asn-131 and Asn-176. The helical transmembrane segment at 209–229 (EIIMGLCLLSLVLSMILMVII) threads the bilayer. The Cytoplasmic portion of the chain corresponds to 230–234 (RYISR). The chain crosses the membrane as a helical span at residues 235 to 255 (VLVWIITILVVLGSLGGTGVL). Over 256 to 284 (WWLYADNKKSLNENLPPDQLQVSKDNLQA) the chain is Extracellular. The helical transmembrane segment at 285 to 305 (LLVYAIAATVFTVILLLMMLI) threads the bilayer. Residues 306-311 (MRKRVA) lie on the Cytoplasmic side of the membrane. Residues 312 to 332 (LTIALFNVAGKVFIHLPLLVF) traverse the membrane as a helical segment. The Extracellular portion of the chain corresponds to 333–334 (QP). A helical transmembrane segment spans residues 335 to 355 (FWTFFALLLFWVYWVMVLLFL). Over 356–376 (GTAGDPFTNEQGFVEFRINGP) the chain is Cytoplasmic. Residues 377–397 (LQYMWWYHLVGLIWISEFILA) traverse the membrane as a helical segment. The Extracellular segment spans residues 398-438 (CQQMTIAGAVVTYYFTRNKNDLPFTPILASVNRLIRYHLGT). A helical membrane pass occupies residues 439–459 (VAKGAFIITLVKIPRMILMYI). The Cytoplasmic portion of the chain corresponds to 460 to 533 (HSQLKGKENA…RVAAINTVGD (74 aa)). A helical membrane pass occupies residues 534-554 (FMLFLGKILIVSCTGLAGIML). Residues 555–562 (LNYQRDYT) lie on the Extracellular side of the membrane. The chain crosses the membrane as a helical span at residues 563–583 (VWVLPLIIVCLFAFLVAHCFL). Residues 584-651 (SIYEMVVDVL…KPMASGTSTA (68 aa)) lie on the Cytoplasmic side of the membrane. The tract at residues 629–651 (LKEPGSTAEGRELKPMASGTSTA) is disordered.

Belongs to the CTL (choline transporter-like) family.

The protein localises to the cell membrane. Its subcellular location is the mitochondrion outer membrane. The enzyme catalyses choline(out) + n H(+)(in) = choline(in) + n H(+)(out). It carries out the reaction ethanolamine(out) + n H(+)(in) = ethanolamine(in) + n H(+)(out). Choline/H+ antiporter. Also acts as a high-affinity ethanolamine/H+ antiporter, regulating the supply of extracellular ethanolamine (Etn) for the CDP-Etn pathway, redistribute intracellular Etn and balance the CDP-Cho and CDP-Etn arms of the Kennedy pathway. Involved in membrane synthesis and myelin production. In Xenopus laevis (African clawed frog), this protein is Choline transporter-like protein 1 (slc44a1).